Here is a 237-residue protein sequence, read N- to C-terminus: Alpha-S1-casein (237 aa).

An N-terminal signal peptide occupies residues Met-1 to Ala-15. Residues Glu-39–Asp-60 form a disordered region. Ser-79, Ser-80, and Ser-81 each carry phosphoserine.

This sequence belongs to the alpha-casein family. Mammary gland specific. Secreted in milk.

It localises to the secreted. In terms of biological role, important role in the capacity of milk to transport calcium phosphate. The sequence is that of Alpha-S1-casein (CSN1S1) from Notamacropus eugenii (Tammar wallaby).